The sequence spans 261 residues: Polycomb group RING finger protein 1 (261 aa).

The RING-type zinc-finger motif lies at 45 to 84 (CYLCAGYFIDATTITECLHTFCKSCIVKYLQTSKYCPMCN).

In terms of assembly, component of a PRC1-like complex.

It localises to the nucleus. Functionally, component of a Polycomb group (PcG) multiprotein PRC1-like complex, a complex class required to maintain the transcriptionally repressive state of many genes, including Hox genes, throughout development. PcG PRC1 complex acts via chromatin remodeling and modification of histones; it mediates monoubiquitination of histone H2A 'Lys-119', rendering chromatin heritably changed in its expressibility. The sequence is that of Polycomb group RING finger protein 1 (pcgf1) from Danio rerio (Zebrafish).